A 180-amino-acid polypeptide reads, in one-letter code: Large ribosomal subunit protein uL5 (180 aa).

This sequence belongs to the universal ribosomal protein uL5 family. As to quaternary structure, part of the 50S ribosomal subunit; part of the 5S rRNA/L5/L18/L25 subcomplex. Contacts the 5S rRNA and the P site tRNA. Forms a bridge to the 30S subunit in the 70S ribosome.

Functionally, this is one of the proteins that bind and probably mediate the attachment of the 5S RNA into the large ribosomal subunit, where it forms part of the central protuberance. In the 70S ribosome it contacts protein S13 of the 30S subunit (bridge B1b), connecting the 2 subunits; this bridge is implicated in subunit movement. Contacts the P site tRNA; the 5S rRNA and some of its associated proteins might help stabilize positioning of ribosome-bound tRNAs. The polypeptide is Large ribosomal subunit protein uL5 (Mesoplasma florum (strain ATCC 33453 / NBRC 100688 / NCTC 11704 / L1) (Acholeplasma florum)).